The sequence spans 126 residues: RxLR effector protein BLR31 (126 aa).

Residues 1-22 form the signal peptide; the sequence is MLLSRAISVLALLACIRCGVHA. The short motif at 44 to 58 is the RxLR-dEER element; it reads RLLRTSVDFKDSEER.

The protein belongs to the RxLR effector family.

Its subcellular location is the secreted. The protein localises to the host cell. In terms of biological role, secreted effector that triggers a hypersensitive response (HR) in 3 Lactuca saligna accessions (CGN05947, CGN05310, CGN05304). This Bremia lactucae (Lettuce downy mildew) protein is RxLR effector protein BLR31.